Reading from the N-terminus, the 574-residue chain is Aspartate--tRNA ligase (574 aa).

Glu169 provides a ligand contact to L-aspartate. Residues 193–196 (QLFK) form an aspartate region. Arg215 contacts L-aspartate. Residues 215–217 (RDE) and Gln224 contribute to the ATP site. His437 provides a ligand contact to L-aspartate. Glu471 contacts ATP. Arg478 serves as a coordination point for L-aspartate. 523-526 (GLDR) contacts ATP.

Belongs to the class-II aminoacyl-tRNA synthetase family. Type 1 subfamily. Homodimer.

It localises to the cytoplasm. The enzyme catalyses tRNA(Asp) + L-aspartate + ATP = L-aspartyl-tRNA(Asp) + AMP + diphosphate. In terms of biological role, catalyzes the attachment of L-aspartate to tRNA(Asp) in a two-step reaction: L-aspartate is first activated by ATP to form Asp-AMP and then transferred to the acceptor end of tRNA(Asp). This is Aspartate--tRNA ligase from Mycoplasma mycoides subsp. mycoides SC (strain CCUG 32753 / NCTC 10114 / PG1).